The following is a 209-amino-acid chain: Molybdenum cofactor guanylyltransferase (209 aa).

GTP contacts are provided by residues 13-15 (LAG), lysine 26, asparagine 54, aspartate 74, and aspartate 104. Residue aspartate 104 participates in Mg(2+) binding.

It belongs to the MobA family. As to quaternary structure, monomer. Mg(2+) is required as a cofactor.

The protein resides in the cytoplasm. It carries out the reaction Mo-molybdopterin + GTP + H(+) = Mo-molybdopterin guanine dinucleotide + diphosphate. Its function is as follows. Transfers a GMP moiety from GTP to Mo-molybdopterin (Mo-MPT) cofactor (Moco or molybdenum cofactor) to form Mo-molybdopterin guanine dinucleotide (Mo-MGD) cofactor. In Acinetobacter baumannii (strain ACICU), this protein is Molybdenum cofactor guanylyltransferase.